Consider the following 449-residue polypeptide: UDP-N-acetylmuramate--L-alanine ligase (449 aa).

ATP is bound at residue 110–116 (GTHGKTT).

This sequence belongs to the MurCDEF family.

The protein resides in the cytoplasm. It carries out the reaction UDP-N-acetyl-alpha-D-muramate + L-alanine + ATP = UDP-N-acetyl-alpha-D-muramoyl-L-alanine + ADP + phosphate + H(+). Its pathway is cell wall biogenesis; peptidoglycan biosynthesis. Functionally, cell wall formation. This chain is UDP-N-acetylmuramate--L-alanine ligase, found in Desulfitobacterium hafniense (strain Y51).